Reading from the N-terminus, the 614-residue chain is Glucose oxidase 1 (614 aa).

Residues methionine 1 to alanine 15 form the signal peptide. FAD-binding residues include leucine 52, threonine 53, and glutamate 73. Asparagine 112 is a glycosylation site (N-linked (GlcNAc...) asparagine). Residues isoleucine 117–arginine 136 are disordered. FAD-binding residues include serine 126, asparagine 130, glycine 131, and serine 133. N-linked (GlcNAc...) asparagine glycans are attached at residues asparagine 184 and asparagine 191. Cysteines 187 and 229 form a disulfide. Residue valine 273 participates in FAD binding. N-linked (GlcNAc...) asparagine glycosylation is found at asparagine 279, asparagine 383, and asparagine 416. Catalysis depends on histidine 544, which acts as the Proton acceptor. O2 is bound by residues arginine 565 and valine 566. The FAD site is built by glycine 577 and methionine 589.

This sequence belongs to the GMC oxidoreductase family. Homodimer. FAD is required as a cofactor.

It is found in the secreted. The protein resides in the cell wall. It localises to the cytoplasm. Its subcellular location is the extracellular space. The protein localises to the extracellular matrix. The enzyme catalyses beta-D-glucose + O2 = D-glucono-1,5-lactone + H2O2. Its function is as follows. Glucose oxidase catalyzes the oxidation of beta-D-glucose to D-glucono-delta-lactone and hydrogen peroxide in the presence of molecular oxygen. The polypeptide is Glucose oxidase 1 (Penicillium expansum (Blue mold rot fungus)).